A 264-amino-acid polypeptide reads, in one-letter code: Intermembrane phospholipid transport system ATP-binding protein MlaF (264 aa).

The region spanning 6–242 is the ABC transporter domain; sequence IEVKNLTFKR…QDLRVVQFLK (237 aa). Residue 38 to 45 participates in ATP binding; it reads GPSGIGKT.

This sequence belongs to the ABC transporter superfamily. MlaF family. In terms of assembly, the complex is composed of two ATP-binding proteins (MlaF), two transmembrane proteins (MlaE), two cytoplasmic solute-binding proteins (MlaB) and six periplasmic solute-binding proteins (MlaD).

It is found in the cell inner membrane. Functionally, part of the ABC transporter complex MlaFEDB, which is involved in a phospholipid transport pathway that maintains lipid asymmetry in the outer membrane by retrograde trafficking of phospholipids from the outer membrane to the inner membrane. Responsible for energy coupling to the transport system. The polypeptide is Intermembrane phospholipid transport system ATP-binding protein MlaF (Haemophilus influenzae (strain ATCC 51907 / DSM 11121 / KW20 / Rd)).